A 174-amino-acid chain; its full sequence is Shikimate kinase (174 aa).

15–20 (GTGKST) is an ATP binding site. Ser19 provides a ligand contact to Mg(2+). The substrate site is built by Asp37, Arg61, and Gly82. Arg120 lines the ATP pocket. Arg138 is a substrate binding site.

Belongs to the shikimate kinase family. As to quaternary structure, monomer. Mg(2+) is required as a cofactor.

Its subcellular location is the cytoplasm. The enzyme catalyses shikimate + ATP = 3-phosphoshikimate + ADP + H(+). It functions in the pathway metabolic intermediate biosynthesis; chorismate biosynthesis; chorismate from D-erythrose 4-phosphate and phosphoenolpyruvate: step 5/7. In terms of biological role, catalyzes the specific phosphorylation of the 3-hydroxyl group of shikimic acid using ATP as a cosubstrate. This is Shikimate kinase from Staphylococcus aureus (strain MSSA476).